The chain runs to 328 residues: tRNA dimethylallyltransferase (328 aa).

Position 10–17 (10–17 (GPTASGKT)) interacts with ATP. 12-17 (TASGKT) serves as a coordination point for substrate.

The protein belongs to the IPP transferase family. As to quaternary structure, monomer. Mg(2+) serves as cofactor.

It carries out the reaction adenosine(37) in tRNA + dimethylallyl diphosphate = N(6)-dimethylallyladenosine(37) in tRNA + diphosphate. Catalyzes the transfer of a dimethylallyl group onto the adenine at position 37 in tRNAs that read codons beginning with uridine, leading to the formation of N6-(dimethylallyl)adenosine (i(6)A). The protein is tRNA dimethylallyltransferase of Bifidobacterium longum (strain NCC 2705).